Here is a 541-residue protein sequence, read N- to C-terminus: Imidazole glycerol phosphate synthase hisHF (541 aa).

The Glutamine amidotransferase type-1 domain occupies 2 to 214 (IVSIVDYGSG…LTGNYEQPIS (213 aa)). Residues Cys-80, His-189, and Glu-191 each act as for GATase activity in the active site. The tract at residues 228–541 (LTKRIIACLD…LAIHDVLVRT (314 aa)) is cyclase. Active-site residues include Asp-237 and Asp-396.

In the C-terminal section; belongs to the HisA/HisF family.

The catalysed reaction is 5-[(5-phospho-1-deoxy-D-ribulos-1-ylimino)methylamino]-1-(5-phospho-beta-D-ribosyl)imidazole-4-carboxamide + L-glutamine = D-erythro-1-(imidazol-4-yl)glycerol 3-phosphate + 5-amino-1-(5-phospho-beta-D-ribosyl)imidazole-4-carboxamide + L-glutamate + H(+). It carries out the reaction L-glutamine + H2O = L-glutamate + NH4(+). The protein operates within amino-acid biosynthesis; L-histidine biosynthesis; L-histidine from 5-phospho-alpha-D-ribose 1-diphosphate: step 5/9. IGPS catalyzes the conversion of PRFAR and glutamine to IGP, AICAR and glutamate. The glutaminase domain produces the ammonia necessary for the cyclase domain to produce IGP and AICAR from PRFAR. The ammonia is channeled to the active site of the cyclase domain. This Schizosaccharomyces pombe (strain 972 / ATCC 24843) (Fission yeast) protein is Imidazole glycerol phosphate synthase hisHF (his4).